We begin with the raw amino-acid sequence, 189 residues long: MAAKFVVVLAACVALSHSAMVRRDAPAGGNAFEEMEKHAKEFQKTFSEQFNSLVNSKNTQDFNKALKDGSDSVLQQLSAFSSSLQGAISDANGKAKEALEQARQNVEKTAEELRKAHPDVEKEANAFKDKLQAAVQTTVQESQKLAKEVASNMEETNKKLAPKIKQAYDDFVKHAEEVQKKLHEAATKQ.

A signal peptide spans 1–18 (MAAKFVVVLAACVALSHS). The propeptide occupies 19–23 (AMVRR).

This sequence belongs to the insect apolipophorin-3 family. As to quaternary structure, equilibrium between a soluble monomer and a bound lipoprotein form. Apolipophorin-3 associates with lipophorin during lipid loading until each particle contains 9 or 14 molecules of apolipophorin-3. Hemolymph.

It localises to the secreted. Its function is as follows. Assists in the loading of diacylglycerol, generated from triacylglycerol stores in the fat body through the action of adipokinetic hormone, into lipophorin, the hemolymph lipoprotein. It increases the lipid carrying capacity of lipophorin by covering the expanding hydrophobic surface resulting from diacylglycerol uptake. It thus plays a critical role in the transport of lipids during flight in several species of insects. The sequence is that of Apolipophorin-3 from Manduca sexta (Tobacco hawkmoth).